A 430-amino-acid chain; its full sequence is Enolase (430 aa).

Gln-165 is a binding site for (2R)-2-phosphoglycerate. Catalysis depends on Glu-207, which acts as the Proton donor. 3 residues coordinate Mg(2+): Asp-244, Glu-287, and Asp-314. (2R)-2-phosphoglycerate contacts are provided by Lys-339, Arg-368, Ser-369, and Lys-390. The active-site Proton acceptor is the Lys-339.

Belongs to the enolase family. As to quaternary structure, component of the RNA degradosome, a multiprotein complex involved in RNA processing and mRNA degradation. It depends on Mg(2+) as a cofactor.

The protein resides in the cytoplasm. It is found in the secreted. The protein localises to the cell surface. It carries out the reaction (2R)-2-phosphoglycerate = phosphoenolpyruvate + H2O. It participates in carbohydrate degradation; glycolysis; pyruvate from D-glyceraldehyde 3-phosphate: step 4/5. Catalyzes the reversible conversion of 2-phosphoglycerate (2-PG) into phosphoenolpyruvate (PEP). It is essential for the degradation of carbohydrates via glycolysis. This is Enolase from Xanthomonas axonopodis pv. citri (strain 306).